Consider the following 533-residue polypeptide: Thromboxane-A synthase (533 aa).

Residues 1–10 lie on the Cytoplasmic side of the membrane; sequence MEALGFLKLE. A helical transmembrane segment spans residues 11 to 31; that stretch reads VNGPMVTVALSVALLALLKWY. Topologically, residues 32-75 are lumenal; the sequence is STSAFSRLEKLGLRHPKPSPFIGNLMFFRQGFWESQMELRKLYG. A helical transmembrane segment spans residues 76–96; that stretch reads PLCGYYLGRRMFIVISEPDMI. The Cytoplasmic portion of the chain corresponds to 97 to 223; sequence KQVLVENFSN…KRFFEFCIPR (127 aa). Residues 224–244 traverse the membrane as a helical segment; sequence PILVLLLSFPSIMVPLARILP. Over 245-335 the chain is Lumenal; the sequence is NKNRDELNGF…LTVDEIVGQA (91 aa). Residues 336–356 form a helical membrane-spanning segment; that stretch reads FIFLIAGYEIVTNTLSFATYL. Over 357–533 the chain is Cytoplasmic; it reads LATNPDCQEK…NGVYIKIVSR (177 aa). C479 contacts heme.

It belongs to the cytochrome P450 family. In terms of assembly, monomer. Requires heme as cofactor.

It localises to the endoplasmic reticulum membrane. The catalysed reaction is prostaglandin H2 = thromboxane A2. It catalyses the reaction prostaglandin H2 = (12S)-hydroxy-(5Z,8E,10E)-heptadecatrienoate + malonaldehyde. The enzyme catalyses a hydroperoxyeicosatetraenoate = an oxoeicosatetraenoate + H2O. It carries out the reaction (15S)-hydroperoxy-(5Z,8Z,11Z,13E)-eicosatetraenoate = 15-oxo-(5Z,8Z,11Z,13E)-eicosatetraenoate + H2O. The catalysed reaction is (15S)-hydroperoxy-(5Z,8Z,11Z,13E)-eicosatetraenoate + AH2 = (15S)-hydroxy-(5Z,8Z,11Z,13E)-eicosatetraenoate + A + H2O. Its function is as follows. Catalyzes the conversion of prostaglandin H2 (PGH2) to thromboxane A2 (TXA2), a potent inducer of blood vessel constriction and platelet aggregation. Also cleaves PGH2 to 12-hydroxy-heptadecatrienoicacid (12-HHT) and malondialdehyde, which is known to act as a mediator of DNA damage. 12-HHT and malondialdehyde are formed stoichiometrically in the same amounts as TXA2. Additionally, displays dehydratase activity, toward (15S)-hydroperoxy-(5Z,8Z,11Z,13E)-eicosatetraenoate (15(S)-HPETE) producing 15-KETE and 15-HETE. The sequence is that of Thromboxane-A synthase (TBXAS1) from Macaca fascicularis (Crab-eating macaque).